A 2718-amino-acid polypeptide reads, in one-letter code: MPRTKQIHPRNLRDKIEEAQKELNGAEVSKKEILQAGVKGTSESLKGVKRKKIVAENHLKKIPKSPLRNPLQAKHKQNTEESSFAVLHSASESHKKQNYIPVKNGKQFTKQNGETPGIIAEASKSEESVSPKKPLFLQQPSELRRWRSEGADPAKFSDLDEQCDSSSLSSKTRTDNSECISSHCGTTSPSYTNTAFDVLLKAMEPELSTLSQKGSPCAIKTEKLRPNKTARSPPKLKNSSMDAPNQTSQELVAESQSSCTSYTVHMSAAQKNEQGAMQSASHLYHQHEHFVPKSNQHNQQLPGCSGFTGSLTNLQNQENAKLEQVYNIAVTSSVGLTSPSSRSQVTPQNQQMDSASPLSISPANSTQSPPMPIYNSTHVASVVNQSVEQMCNLLLKDQKPKKQGKYICEYCNRACAKPSVLLKHIRSHTGERPYPCVTCGFSFKTKSNLYKHKKSHAHTIKLGLVLQPDAGGLFLSHESPKALSIHSDVEDSGESEEEGATDERQHDLGAMELQPVHIIKRMSNAETLLKSSFTPSSPENVIGDFLLQDRSAESQAVTELPKVVVHHVTVSPLRTDSPKAMDPKPELSSAQKQKDLQVTNVQPLSANMSQGGVSRLETNENSHQKGDMNPLEGKQDSHVGTVHAQLQRQQATDYSQEQQGKLLSPRSLGSTDSGYFSRSESADQTVSPPTPFARRLPSTEQDSGRSNGPSAALVTTSTPSALPTGEKALLLPGQMRPPLATKTLEERISKLISDNEALVDDKQLDSVKPRRTSLSRRGSIDSPKSYIFKDSFQFDLKPVGRRTSSSSDIPKSPFTPTEKSKQVFLLSVPSLDCLPITRSNSMPTTGYSAVPANIIPPPHPLRGSQSFDDKIGAFYDDVFVSGPNAPVPQSGHPRTLVRQAAIEDSSANESHVLGTGQSLDESHQGCHAAGEAMSVRSKALAQGPHIEKKKSHQGRGTMFECETCRNRYRKLENFENHKKFYCSELHGPKTKVAMREPEHSPVPGGLQPQILHYRVAGSSGIWEQTPQIRKRRKMKSVGDDEELQQNESGTSPKSSEGLQFQNALGCNPSLPKHNVTIRSDQQHKNIQLQNSHIHLVARGPEQTMDPKLSTIMEQQISSAAQDKIELQRHGTGISVIQHTNSLSRPNSFDKPEPFERASPVSFQELNRTGKSGSLKVIGISQEESHPSRDGSHPHQLALSDALRGELQESSRKSPSERHVLGQPSRLVRQHNIQVPEILVTEEPDRDLEAQCHDQEKSEKFSWPQRSETLSKLPTEKLPPKKKRLRLAEIEHSSTESSFDSTLSRSLSRESSLSHTSSFSASLDIEDVSKTEASPKIDFLNKAEFLMIPAGLNTLNVPGCHREMRRTASEQINCTQTSMEVSDLRSKSFDCGSITPPQTTPLTELQPPSSPSRVGVTGHVPLLERRRGPLVRQISLNIAPDSHLSPVHPTSFQNTALPSVNAVPYQGPQLTSTSLAEFSANTLHSQTQVKDLQAETSNSSSTNVFPVQQLCDINLLNQIHAPPSHQSTQLSLQVSTQGSKPDKNSVLSGSSKSEDCFAPKYQLHCQVFTSGPSCSSNPVHSLPNQVISDPVGTDHCVTSATLPTKLIDSMSNSHPLLPPELRPLGSQVQKVPSSFMLPIRLQSSVPAYCFATLTSLPQILVTQDLPNQPICQTNHSVVPISEEQNSVPTLQKGHQNALPNPEKEFLCENVFSEMSQNSSLSESLPITQKISVGRLSPQQESSASSKRMLSPANSLDIAMEKHQKRAKDENGAVCATDVRPLEALSSRVNEASKQKKPILVRQVCTTEPLDGVMLEKDVFSQPEISNEAVNLTNVLPADNSSTGCSKFVVIEPISELQEFENIKSSTSLTLTVRSSPAPSENTHISPLKCTDNNQERKSPGVKNQGDKVNIQEQSQQPVTSLSLFNIKDTQQLAFPSLKTTTNFTWCYLLRQKSLHLPQKDQKTSAYTDWTVSASNPNPLGLPTKVALALLNSKQNTGKSLYCQAITTHSKSDLLVYSSKWKSSLSKRALGNQKSTVVEFSNKDASEINSEQDKENSLIKSEPRRIKIFDGGYKSNEEYVYVRGRGRGKYICEECGIRCKKPSMLKKHIRTHTDVRPYHCTYCNFSFKTKGNLTKHMKSKAHSKKCVDLGVSVGLIDEQDTEESDEKQRFSYERSGYDLEESDGPDEDDNENEDDDEDSQAESVLSATPSVTASPQHLPSRSSLQDPVSTDEDVRITDCFSGVHTDPMDVLPRALLTRMTVLSTAQSDYNRKTLSPGKARQRAARDENDTIPSVDTSRSPCHQMSVDYPESEEILRSSMAGKAVAITQSPSSVRLPPAAAEHSPQTAAGMPSVASPHPDPQEQKQQITLQPTPGLPSPHTHLFSHLPLHSQQQSRTPYNMVPVGGIHVVPAGLTYSTFVPLQAGPVQLTIPAVSVVHRTLGTHRNTVTEVSGTTNPAGVAELSSVVPCIPIGQIRVPGLQNLSTPGLQSLPSLSMETVNIVGLANTNMAPQVHPPGLALNAVGLQVLTANPSSQSSPAPQAHIPGLQILNIALPTLIPSVSQVAVDAQGAPEMPASQSKACETQPKQTSVASANQVSRTESPQGLPTVQRENAKKVLNPPAPAGDHARLDGLSKMDTEKAASANHVKPKPELTSIQGQPASTSQPLLKAHSEVFTKPSGQQTLSPDRQVPRPTALPRRQPTVHFSDVSSDDDEDRLVIAT.

Disordered stretches follow at residues 58 to 182 (HLKK…CISS), 210 to 256 (LSQK…AESQ), and 335 to 373 (GLTS…PMPI). S141 carries the phosphoserine modification. The span at 142–158 (ELRRWRSEGADPAKFSD) shows a compositional bias: basic and acidic residues. Polar residues-rich tracts occupy residues 164–182 (DSSS…CISS) and 237–256 (KNSS…AESQ). Residues 406 to 428 (YICEYCNRACAKPSVLLKHIRSH) form a C2H2-type 1 zinc finger. The residue at position 429 (T429) is a Phosphothreonine. The C2H2-type 2 zinc finger occupies 434-456 (YPCVTCGFSFKTKSNLYKHKKSH). Phosphoserine is present on residues S476, S479, S492, S495, S571, and S577. The interval 484 to 511 (SIHSDVEDSGESEEEGATDERQHDLGAM) is disordered. Residues 490–500 (EDSGESEEEGA) show a composition bias toward acidic residues. Positions 574-727 (RTDSPKAMDP…TPSALPTGEK (154 aa)) are disordered. Positions 576 to 585 (DSPKAMDPKP) are enriched in basic and acidic residues. Residues 588–612 (SSAQKQKDLQVTNVQPLSANMSQGG) show a composition bias toward polar residues. The span at 617 to 626 (ETNENSHQKG) shows a compositional bias: basic and acidic residues. Polar residues-rich tracts occupy residues 644–687 (AQLQ…QTVS) and 698–721 (STEQ…TPSA). Residues S670 and S681 each carry the phosphoserine modification. The CCHC HIVEP-type zinc-finger motif lies at 956–986 (GTMFECETCRNRYRKLENFENHKKFYCSELH). The interval 1022 to 1062 (WEQTPQIRKRRKMKSVGDDEELQQNESGTSPKSSEGLQFQN) is disordered. Phosphoserine occurs at positions 1036, 1051, 1091, 1158, 1161, and 1180. Residues 1045 to 1062 (QNESGTSPKSSEGLQFQN) show a composition bias toward polar residues. A disordered region spans residues 1138-1169 (HTNSLSRPNSFDKPEPFERASPVSFQELNRTG). Residues 1160–1169 (VSFQELNRTG) show a composition bias toward polar residues. 2 stretches are compositionally biased toward basic and acidic residues: residues 1202-1219 (LRGE…ERHV) and 1246-1259 (DLEA…KSEK). 3 disordered regions span residues 1202–1282 (LRGE…PKKK), 1384–1414 (RSKS…SRVG), and 1523–1548 (SHQS…VLSG). T1268 is modified (phosphothreonine). Composition is skewed to low complexity over residues 1394-1406 (TPPQ…ELQP) and 1523-1536 (SHQS…VSTQ). 4 positions are modified to phosphoserine: S1735, S1740, S1749, and S1753. Over residues 1871 to 1883 (VRSSPAPSENTHI) the composition is skewed to polar residues. Residues 1871–1911 (VRSSPAPSENTHISPLKCTDNNQERKSPGVKNQGDKVNIQE) form a disordered region. Residues S1884 and S2033 each carry the phosphoserine modification. 2 consecutive C2H2-type zinc fingers follow at residues 2088–2110 (YICE…IRTH) and 2116–2140 (YHCT…SKAH). Disordered regions lie at residues 2155-2228 (DEQD…PVST), 2265-2303 (SDYN…HQMS), 2327-2381 (SPSS…THLF), and 2572-2718 (PASQ…VIAT). Positions 2164 to 2175 (EKQRFSYERSGY) are enriched in basic and acidic residues. The span at 2176-2198 (DLEESDGPDEDDNENEDDDEDSQ) shows a compositional bias: acidic residues. 2 stretches are compositionally biased toward polar residues: residues 2199-2226 (AESV…QDPV) and 2288-2300 (TIPS…SPCH). Residues S2327 and S2599 each carry the phosphoserine modification. Residues 2573-2608 (ASQSKACETQPKQTSVASANQVSRTESPQGLPTVQR) show a composition bias toward polar residues. The segment covering 2623–2637 (DHARLDGLSKMDTEK) has biased composition (basic and acidic residues). Residues 2651–2663 (TSIQGQPASTSQP) are compositionally biased toward polar residues. S2669 and S2682 each carry phosphoserine.

In terms of assembly, interacts with UTP4.

It is found in the nucleus. The protein localises to the cytoplasm. This protein specifically binds to the DNA sequence 5'-GGGACTTTCC-3' which is found in the enhancer elements of numerous viral promoters such as those of SV40, CMV, or HIV-1. In addition, related sequences are found in the enhancer elements of a number of cellular promoters, including those of the class I MHC, interleukin-2 receptor, and interferon-beta genes. It may act in T-cell activation. Involved in activating HIV-1 gene expression. Isoform 2 and isoform 3 also bind to the IPCS (IRF1 and p53 common sequence) DNA sequence in the promoter region of interferon regulatory factor 1 and p53 genes and are involved in transcription regulation of these genes. Isoform 2 does not activate HIV-1 gene expression. Isoform 2 and isoform 3 may be involved in apoptosis. This Homo sapiens (Human) protein is Zinc finger protein 40 (HIVEP1).